Consider the following 354-residue polypeptide: NAD-dependent epimerase/dehydratase ALT6 (354 aa).

K41 and Y174 together coordinate NADP(+).

This sequence belongs to the NAD(P)-dependent epimerase/dehydratase family. Dihydroflavonol-4-reductase subfamily.

The protein operates within mycotoxin biosynthesis. Its function is as follows. NAD-dependent epimerase/dehydratase; part of the gene cluster that mediates the biosynthesis of the host-selective toxins (HSTs) AAL-toxins, sphinganine-analog mycotoxins responsible for Alternaria stem canker on tomato by the tomato pathotype. The biosynthesis starts with the polyketide synthase ALT1-catalyzed C-16 carbon chain assembly from one starter acetyl-CoA unit with malonyl-CoA extender units. ALT1 also selectively transfers methyl groups at the first and the third cycle of chain elongation for AAL toxin. The C-16 polyketide chain is released from the enzyme by a nucleophilic attack of a carbanion, which is derived from R-carbon of glycin by decarboxylation, on the carbonyl carbon of polyketide acyl chain. This step is probably catalyzed by a pyridoxal 5'-phosphate-dependent aminoacyl transferase ALT4. The respective functions of the other enzymes encoded by the cluster have still to be elucidated. The sphingosine N-acyltransferase-like protein ALT7 seems not to act as a resistance/self-tolerance factor against the toxin in the toxin biosynthetic gene cluster, contrary to what is expected. This is NAD-dependent epimerase/dehydratase ALT6 from Alternaria alternata (Alternaria rot fungus).